The sequence spans 314 residues: Methionyl-tRNA formyltransferase (314 aa).

111-114 (SLLP) lines the (6S)-5,6,7,8-tetrahydrofolate pocket.

The protein belongs to the Fmt family.

It carries out the reaction L-methionyl-tRNA(fMet) + (6R)-10-formyltetrahydrofolate = N-formyl-L-methionyl-tRNA(fMet) + (6S)-5,6,7,8-tetrahydrofolate + H(+). Functionally, attaches a formyl group to the free amino group of methionyl-tRNA(fMet). The formyl group appears to play a dual role in the initiator identity of N-formylmethionyl-tRNA by promoting its recognition by IF2 and preventing the misappropriation of this tRNA by the elongation apparatus. The polypeptide is Methionyl-tRNA formyltransferase (Nitrobacter winogradskyi (strain ATCC 25391 / DSM 10237 / CIP 104748 / NCIMB 11846 / Nb-255)).